The chain runs to 462 residues: Argininosuccinate lyase (462 aa).

Belongs to the lyase 1 family. Argininosuccinate lyase subfamily.

Its subcellular location is the cytoplasm. The enzyme catalyses 2-(N(omega)-L-arginino)succinate = fumarate + L-arginine. It participates in amino-acid biosynthesis; L-arginine biosynthesis; L-arginine from L-ornithine and carbamoyl phosphate: step 3/3. This is Argininosuccinate lyase from Rippkaea orientalis (strain PCC 8801 / RF-1) (Cyanothece sp. (strain PCC 8801)).